The sequence spans 296 residues: Protoheme IX farnesyltransferase (296 aa).

Residues methionine 1 to valine 9 lie on the Cytoplasmic side of the membrane. The chain crosses the membrane as a helical span at residues threonine 10–leucine 28. At alanine 29–proline 37 the chain is on the periplasmic side. A helical membrane pass occupies residues leucine 38 to phenylalanine 56. Residues asparagine 57–lysine 78 are Cytoplasmic-facing. Residues glycine 79–glycine 97 form a helical membrane-spanning segment. Residues phenylalanine 98 to proline 107 are Periplasmic-facing. Residues leucine 108–leucine 126 form a helical membrane-spanning segment. The Cytoplasmic portion of the chain corresponds to tyrosine 127 to proline 197. Residues valine 198–phenylalanine 216 traverse the membrane as a helical segment. The Periplasmic portion of the chain corresponds to alanine 217–tyrosine 228. Residues alanine 229 to methionine 247 traverse the membrane as a helical segment. Residues alanine 248 to serine 268 lie on the Cytoplasmic side of the membrane. A helical transmembrane segment spans residues isoleucine 269 to asparagine 287. Residues serine 288–tryptophan 296 lie on the Periplasmic side of the membrane.

This sequence belongs to the UbiA prenyltransferase family. Protoheme IX farnesyltransferase subfamily.

The protein resides in the cell inner membrane. The enzyme catalyses heme b + (2E,6E)-farnesyl diphosphate + H2O = Fe(II)-heme o + diphosphate. It participates in porphyrin-containing compound metabolism; heme O biosynthesis; heme O from protoheme: step 1/1. Its function is as follows. Converts heme B (protoheme IX) to heme O by substitution of the vinyl group on carbon 2 of heme B porphyrin ring with a hydroxyethyl farnesyl side group. The polypeptide is Protoheme IX farnesyltransferase (Salmonella typhimurium (strain LT2 / SGSC1412 / ATCC 700720)).